The primary structure comprises 223 residues: ATP-dependent dethiobiotin synthetase BioD (223 aa).

Threonine 16 contacts Mg(2+). Lysine 37 is an active-site residue. Serine 41 is a substrate binding site. The Mg(2+) site is built by aspartate 50 and glutamate 111. ATP-binding positions include aspartate 50, 111–114 (EGAG), and 171–172 (NR).

It belongs to the dethiobiotin synthetase family. As to quaternary structure, homodimer. Requires Mg(2+) as cofactor.

It localises to the cytoplasm. It catalyses the reaction (7R,8S)-7,8-diammoniononanoate + CO2 + ATP = (4R,5S)-dethiobiotin + ADP + phosphate + 3 H(+). It functions in the pathway cofactor biosynthesis; biotin biosynthesis; biotin from 7,8-diaminononanoate: step 1/2. Its function is as follows. Catalyzes a mechanistically unusual reaction, the ATP-dependent insertion of CO2 between the N7 and N8 nitrogen atoms of 7,8-diaminopelargonic acid (DAPA, also called 7,8-diammoniononanoate) to form a ureido ring. This is ATP-dependent dethiobiotin synthetase BioD from Anaeromyxobacter sp. (strain K).